The primary structure comprises 660 residues: Phosphatidylinositol-3-phosphate phosphatase MTMR7 (660 aa).

Residues 126-504 (GWVLIDLSEE…FMYKFWSGMY (379 aa)) enclose the Myotubularin phosphatase domain. Positions 250, 275, and 276 each coordinate a 1,2-diacyl-sn-glycero-3-phospho-(1D-myo-inositol-3-phosphate). Residue Cys338 is the Phosphocysteine intermediate of the active site. Positions 339, 340, 341, 342, 343, 344, and 384 each coordinate a 1,2-diacyl-sn-glycero-3-phospho-(1D-myo-inositol-3-phosphate). A coiled-coil region spans residues 514–558 (RQSVTDYLMAVKEETQQLEEELEALEERLEKIQKVQLNCTKVKSK). Residues 554-660 (KVKSKQSEPS…DSDEAVFLTA (107 aa)) are disordered. Residues 566–596 (SGFSTSDNSIANTPQDYSGNMKSFPSRSPSQ) are compositionally biased toward polar residues. Thr578 bears the Phosphothreonine mark. Over residues 641–653 (APSEDSGKDRDSD) the composition is skewed to basic and acidic residues.

The protein belongs to the protein-tyrosine phosphatase family. Non-receptor class myotubularin subfamily. As to quaternary structure, heterodimer (via C-terminus) with MTMR9 (via coiled coil domain); the interaction enhances MTMR7 catalytic activity. Does not homodimerize. Interacts with RAB1B (in GDP-bound form).

Its subcellular location is the cytoplasm. It localises to the endomembrane system. It catalyses the reaction a 1,2-diacyl-sn-glycero-3-phospho-(1D-myo-inositol-3-phosphate) + H2O = a 1,2-diacyl-sn-glycero-3-phospho-(1D-myo-inositol) + phosphate. The catalysed reaction is 1D-myo-inositol 1,3-bisphosphate + H2O = 1D-myo-inositol 1-phosphate + phosphate. Its activity is regulated as follows. Interaction with MTMR9 increases phosphatase activity. In terms of biological role, lipid phosphatase that specifically dephosphorylates the D-3 position of phosphatidylinositol 3-phosphate (PtdIns(3)P) and inositol 1,3-bisphosphate (Ins(1,3)P2). The chain is Phosphatidylinositol-3-phosphate phosphatase MTMR7 from Pongo abelii (Sumatran orangutan).